Reading from the N-terminus, the 417-residue chain is Serine hydroxymethyltransferase 2 (417 aa).

Residues leucine 121 and 125–127 (GHL) each bind (6S)-5,6,7,8-tetrahydrofolate. Position 230 is an N6-(pyridoxal phosphate)lysine (lysine 230). 355 to 357 (SPF) contacts (6S)-5,6,7,8-tetrahydrofolate.

The protein belongs to the SHMT family. As to quaternary structure, homodimer. The cofactor is pyridoxal 5'-phosphate.

The protein resides in the cytoplasm. The catalysed reaction is (6R)-5,10-methylene-5,6,7,8-tetrahydrofolate + glycine + H2O = (6S)-5,6,7,8-tetrahydrofolate + L-serine. It functions in the pathway one-carbon metabolism; tetrahydrofolate interconversion. Its pathway is amino-acid biosynthesis; glycine biosynthesis; glycine from L-serine: step 1/1. Catalyzes the reversible interconversion of serine and glycine with tetrahydrofolate (THF) serving as the one-carbon carrier. This reaction serves as the major source of one-carbon groups required for the biosynthesis of purines, thymidylate, methionine, and other important biomolecules. Also exhibits THF-independent aldolase activity toward beta-hydroxyamino acids, producing glycine and aldehydes, via a retro-aldol mechanism. This is Serine hydroxymethyltransferase 2 from Pseudomonas syringae pv. syringae (strain B728a).